Reading from the N-terminus, the 449-residue chain is Phosphoglucosamine mutase (449 aa).

Ser101 serves as the catalytic Phosphoserine intermediate. Mg(2+) contacts are provided by Ser101, Asp242, Asp244, and Asp246. The residue at position 101 (Ser101) is a Phosphoserine.

Belongs to the phosphohexose mutase family. It depends on Mg(2+) as a cofactor. Activated by phosphorylation.

It catalyses the reaction alpha-D-glucosamine 1-phosphate = D-glucosamine 6-phosphate. Its function is as follows. Catalyzes the conversion of glucosamine-6-phosphate to glucosamine-1-phosphate. This Hyphomonas neptunium (strain ATCC 15444) protein is Phosphoglucosamine mutase.